Reading from the N-terminus, the 198-residue chain is Probable nicotinate-nucleotide adenylyltransferase (198 aa).

It belongs to the NadD family.

It catalyses the reaction nicotinate beta-D-ribonucleotide + ATP + H(+) = deamido-NAD(+) + diphosphate. The protein operates within cofactor biosynthesis; NAD(+) biosynthesis; deamido-NAD(+) from nicotinate D-ribonucleotide: step 1/1. Its function is as follows. Catalyzes the reversible adenylation of nicotinate mononucleotide (NaMN) to nicotinic acid adenine dinucleotide (NaAD). In Herpetosiphon aurantiacus (strain ATCC 23779 / DSM 785 / 114-95), this protein is Probable nicotinate-nucleotide adenylyltransferase.